Consider the following 316-residue polypeptide: Glutathione synthetase (316 aa).

An ATP-grasp domain is found at 125-310 (KLFTAWFSDL…ITGMLMDAIE (186 aa)). An ATP-binding site is contributed by 151–207 (WEKHSDIILKPLDGMGGASIFRVKEGDPNLGVIAETLTEHGTCYCMAQNYLPAIKDG). Positions 281 and 283 each coordinate Mg(2+).

The protein belongs to the prokaryotic GSH synthase family. The cofactor is Mg(2+). It depends on Mn(2+) as a cofactor.

The enzyme catalyses gamma-L-glutamyl-L-cysteine + glycine + ATP = glutathione + ADP + phosphate + H(+). It participates in sulfur metabolism; glutathione biosynthesis; glutathione from L-cysteine and L-glutamate: step 2/2. The protein is Glutathione synthetase of Shigella flexneri.